The primary structure comprises 685 residues: ATP-dependent RNA helicase MSS116, mitochondrial (685 aa).

The transit peptide at 1-34 (MLVLQRIPKRALQFNGVTGTVCSTRLFHHAFNLN) directs the protein to the mitochondrion. The disordered stretch occupies residues 42-107 (SEERRYRNSN…NNGSRRRYQD (66 aa)). The span at 58–69 (SDSNSNNKYRNS) shows a compositional bias: low complexity. Basic and acidic residues predominate over residues 70–86 (SYDDNRSRSNYGGDKRN). Over residues 88-99 (RNNNNYGNNRNN) the composition is skewed to low complexity. Positions 138–166 (SLLEESLLDANVHKAISAMKFESLTPVQQ) match the Q motif motif. The region spanning 170-357 (KPILTTENDV…ATIMNKKDCL (188 aa)) is the Helicase ATP-binding domain. 183-190 (AKTGTGKT) is a binding site for ATP. The DEAD box motif lies at 298 to 301 (DEAD). Residues 386 to 542 (SMVALIQSIE…EDYLNQDKEN (157 aa)) form the Helicase C-terminal domain. A disordered region spans residues 633–685 (DREFDDEDRYTSRSQNNYKSKQSSKSNRFEGRNDYSNSRRSHANQKRNFTFDD). The span at 644–658 (SRSQNNYKSKQSSKS) shows a compositional bias: low complexity.

The protein belongs to the DEAD box helicase family. DDX18/HAS1 subfamily.

It is found in the mitochondrion matrix. It catalyses the reaction ATP + H2O = ADP + phosphate + H(+). Functionally, ATP-dependent RNA helicase required for mitochondrial splicing of group I and II introns. Also required for efficient mitochondrial translation. This is ATP-dependent RNA helicase MSS116, mitochondrial (MSS116) from Kluyveromyces lactis (strain ATCC 8585 / CBS 2359 / DSM 70799 / NBRC 1267 / NRRL Y-1140 / WM37) (Yeast).